The sequence spans 260 residues: F-actin-capping protein subunit beta (260 aa).

This sequence belongs to the F-actin-capping protein beta subunit family. In terms of assembly, component of the F-actin capping complex, composed of a heterodimer of an alpha and a beta subunit.

It is found in the cytoplasm. The protein resides in the cytoskeleton. It localises to the actin patch. F-actin-capping proteins bind in a Ca(2+)-independent manner to the fast growing ends of actin filaments (barbed end) thereby blocking the exchange of subunits at these ends. Unlike other capping proteins (such as gelsolin and severin), these proteins do not sever actin filaments. This Yarrowia lipolytica (strain CLIB 122 / E 150) (Yeast) protein is F-actin-capping protein subunit beta (CAP2).